We begin with the raw amino-acid sequence, 630 residues long: Phosphomethylpyrimidine synthase (630 aa).

Disordered regions lie at residues 1-22 and 97-120; these read MADIDSRLDTTQATPIGVTTGP and AQREVRPEDNGQLGPDRSGGVPAF. Residues Asn-224, Met-253, Tyr-282, His-318, 338 to 340, 379 to 382, and Glu-418 each bind substrate; these read SRG and DGLR. His-422 serves as a coordination point for Zn(2+). Residue Tyr-445 participates in substrate binding. Zn(2+) is bound at residue His-486. Residues Cys-566, Cys-569, and Cys-574 each coordinate [4Fe-4S] cluster.

This sequence belongs to the ThiC family. As to quaternary structure, homodimer. [4Fe-4S] cluster serves as cofactor.

The enzyme catalyses 5-amino-1-(5-phospho-beta-D-ribosyl)imidazole + S-adenosyl-L-methionine = 4-amino-2-methyl-5-(phosphooxymethyl)pyrimidine + CO + 5'-deoxyadenosine + formate + L-methionine + 3 H(+). Its pathway is cofactor biosynthesis; thiamine diphosphate biosynthesis. In terms of biological role, catalyzes the synthesis of the hydroxymethylpyrimidine phosphate (HMP-P) moiety of thiamine from aminoimidazole ribotide (AIR) in a radical S-adenosyl-L-methionine (SAM)-dependent reaction. This chain is Phosphomethylpyrimidine synthase, found in Sphingopyxis alaskensis (strain DSM 13593 / LMG 18877 / RB2256) (Sphingomonas alaskensis).